The chain runs to 410 residues: Probable inactive allantoicase (410 aa).

It belongs to the allantoicase family.

In terms of biological role, the function of this enzyme is unclear as allantoicase activity is not known to exist in mammals. This is Probable inactive allantoicase (ALLC) from Macaca fascicularis (Crab-eating macaque).